We begin with the raw amino-acid sequence, 357 residues long: DNA replication and repair protein RecF (357 aa).

31-38 contacts ATP; the sequence is GQNGAGKT.

It belongs to the RecF family.

Its subcellular location is the cytoplasm. Its function is as follows. The RecF protein is involved in DNA metabolism; it is required for DNA replication and normal SOS inducibility. RecF binds preferentially to single-stranded, linear DNA. It also seems to bind ATP. The protein is DNA replication and repair protein RecF of Coxiella burnetii (strain RSA 493 / Nine Mile phase I).